A 334-amino-acid polypeptide reads, in one-letter code: Dual specificity mitogen-activated protein kinase kinase 6 (334 aa).

Over residues 1-11 (MSQSKGKKRNP) the composition is skewed to basic residues. Residues 1–34 (MSQSKGKKRNPGLKIPKEAFEQPQTSSTPPRDLD) form a disordered region. The tract at residues 4 to 19 (SKGKKRNPGLKIPKEA) is d domain. The 262-residue stretch at 53–314 (LEPIVELGRG…YPELMQHPFF (262 aa)) folds into the Protein kinase domain. ATP is bound by residues 59 to 67 (LGRGAYGVV) and Lys82. Asp179 (proton acceptor) is an active-site residue. Ser207 is modified (phosphoserine; by MAPK3). Thr211 carries the phosphothreonine; by MAPK3 modification. The DVD domain stretch occupies residues 311 to 334 (HPFFTVHESKAADVASFVKLILGD).

This sequence belongs to the protein kinase superfamily. STE Ser/Thr protein kinase family. MAP kinase kinase subfamily. As to quaternary structure, dimer. Interacts (via its D domain) with its substrates MAPK11, MAPK12, MAPK13 and MAPK14. Interacts (via its DVD domain) with MAP3Ks activators like MAP3K5/ASK1, MAP3K1/MEKK1, MAP3K2/MEKK2, MAP3K3/MEKK3, MAP3K4/MEKK4, MAP3K7/TAK1, MAP3K11/MLK3 and MAP3K17/TAOK2. Interacts with DCTN1. Interacts with EIF2AK2/PKR. In terms of processing, weakly autophosphorylated. Phosphorylated at Ser-207 and Thr-211 by the majority of M3Ks, such as MAP3K5/ASK1, MAP3K1/MEKK1, MAP3K2/MEKK2, MAP3K3/MEKK3, MAP3K4/MEKK4, MAP3K7/TAK1, MAP3K11/MLK3 and MAP3K17/TAOK2. Post-translationally, in response to genotoxic stress, MAP3K-phosphorylated MAP2K6 is ubiquitinated and degraded by the SCF(FBXO31) complex.

Its subcellular location is the nucleus. The protein localises to the cytoplasm. The protein resides in the cytoskeleton. It carries out the reaction L-seryl-[protein] + ATP = O-phospho-L-seryl-[protein] + ADP + H(+). The catalysed reaction is L-threonyl-[protein] + ATP = O-phospho-L-threonyl-[protein] + ADP + H(+). It catalyses the reaction L-tyrosyl-[protein] + ATP = O-phospho-L-tyrosyl-[protein] + ADP + H(+). Activated by dual phosphorylation on Ser-207 and Thr-211 in response to a variety of cellular stresses, including UV radiation, osmotic shock, hypoxia, inflammatory cytokines, interferon gamma (IFNG), and less often by growth factors. MAP2K6/MKK6 is activated by the majority of M3Ks, such as MAP3K5/ASK1, MAP3K1/MEKK1, MAP3K2/MEKK2, MAP3K3/MEKK3, MAP3K4/MEKK4, MAP3K7/TAK1, MAP3K11/MLK3 and MAP3K17/TAOK2. Functionally, dual specificity protein kinase which acts as an essential component of the MAP kinase signal transduction pathway. With MAP3K3/MKK3, catalyzes the concomitant phosphorylation of a threonine and a tyrosine residue in the MAP kinases p38 MAPK11, MAPK12, MAPK13 and MAPK14 and plays an important role in the regulation of cellular responses to cytokines and all kinds of stresses. Especially, MAP2K3/MKK3 and MAP2K6/MKK6 are both essential for the activation of MAPK11 and MAPK13 induced by environmental stress, whereas MAP2K6/MKK6 is the major MAPK11 activator in response to TNF. MAP2K6/MKK6 also phosphorylates and activates PAK6. The p38 MAP kinase signal transduction pathway leads to direct activation of transcription factors. Nuclear targets of p38 MAP kinase include the transcription factors ATF2 and ELK1. Within the p38 MAPK signal transduction pathway, MAP3K6/MKK6 mediates phosphorylation of STAT4 through MAPK14 activation, and is therefore required for STAT4 activation and STAT4-regulated gene expression in response to IL-12 stimulation. The pathway is also crucial for IL-6-induced SOCS3 expression and down-regulation of IL-6-mediated gene induction; and for IFNG-dependent gene transcription. Has a role in osteoclast differentiation through NF-kappa-B transactivation by TNFSF11, and in endochondral ossification and since SOX9 is another likely downstream target of the p38 MAPK pathway. MAP2K6/MKK6 mediates apoptotic cell death in thymocytes. Acts also as a regulator for melanocytes dendricity, through the modulation of Rho family GTPases. The protein is Dual specificity mitogen-activated protein kinase kinase 6 (Map2k6) of Mus musculus (Mouse).